Reading from the N-terminus, the 255-residue chain is MNTFLIIDGMNLVRRMHAAQPNENDVNGLDIRVGSACKKLVKYHQPTHVAVVWDGDDISWRKHLFEDYKKGRKPMPEALSNTLPALKSYLAEQGVNSIDAASEADDVIATLASKLVANGGKAIIVSTDKGFTQLSDPYIQRWDHFNQHYMTIEEREEKLGVEHSQFIDYLALAGDSGNKIPGVPGIGPKSAIELLRTFRSLANIYASLDKIGAKQAKKLEAGKQMARLSYKLVQLQTDIPLNINLSQFRLPNPNA.

Aspartate 105 serves as a coordination point for Mg(2+). A 5'-3' exonuclease domain is found at 162–253 (EHSQFIDYLA…NLSQFRLPNP (92 aa)). K(+)-binding residues include leucine 172, alanine 173, proline 181, valine 183, and isoleucine 186. The interaction with DNA stretch occupies residues 185 to 190 (GIGPKS).

It belongs to the Xni family. Mg(2+) serves as cofactor. It depends on K(+) as a cofactor.

Its function is as follows. Has flap endonuclease activity. During DNA replication, flap endonucleases cleave the 5'-overhanging flap structure that is generated by displacement synthesis when DNA polymerase encounters the 5'-end of a downstream Okazaki fragment. The protein is Flap endonuclease Xni of Shewanella sediminis (strain HAW-EB3).